The sequence spans 524 residues: Acetyl-CoA hydrolase (524 aa).

Residue 275-279 coordinates CoA; the sequence is GIGNI. E300 (5-glutamyl coenzyme A thioester intermediate) is an active-site residue. CoA contacts are provided by N390 and G394.

It belongs to the acetyl-CoA hydrolase/transferase family.

It localises to the cytoplasm. The enzyme catalyses acetyl-CoA + H2O = acetate + CoA + H(+). In terms of biological role, presumably involved in regulating the intracellular acetyl-CoA pool for fatty acid and cholesterol synthesis and fatty acid oxidation. In Candida albicans (strain SC5314 / ATCC MYA-2876) (Yeast), this protein is Acetyl-CoA hydrolase (ACH1).